A 1072-amino-acid chain; its full sequence is MPGEEEERAFLVAREELASALRRDSGQAFSLEQLRPLLASSLPLAARYLQLDAARLVRCNAHGEPRNYLNTLSTALNILEKYGRNLLSPQRPRYWRGVKFNNPVFRSTVDAVQGGRDVLRLYGYTEEQPDGLSFPEGQEEPDEHQVATVTLEVLLLRTELSLLLQNTHPRQQALEQLLEDKVEDDMLQLSEFDPLLREIAPGPLTTPSVPGSTPGPCFLCGSAPGTLHCPSCKQALCPACDHLFHGHPSRAHHLRQTLPGVLQGTHLSPSLPASAQPRPQSTSLLALGDSSLSSPNPASAHLPWHCAACAMLNEPWAVLCVACDRPRGCKGLGLGTEGPQGTGGLEPDLARGRWACQSCTFENEAAAVLCSICERPRLAQPPSLVVDSRDAGICLQPLQQGDALLASAQSQVWYCIHCTFCNSSPGWVCVMCNRTSSPIPAQHAPRPYASSLEKGPPKPGPPRRLSAPLPSSCGDPEKQRQDKMREEGLQLVSMIREGEAAGACPEEIFSALQYSGTEVPLQWLRSELPYVLEMVAELAGQQDPGLGAFSCQEARRAWLDRHGNLDEAVEECVRTRRRKVQELQSLGFGPEEGSLQALFQHGGDVSRALTELQRQRLEPFRQRLWDSGPEPTPSWDGPDKQSLVRRLLAVYALPSWGRAELALSLLQETPRNYELGDVVEAVRHSQDRAFLRRLLAQECAVCGWALPHNRMQALTSCECTICPDCFRQHFTIALKEKHITDMVCPACGRPDLTDDTQLLSYFSTLDIQLRESLEPDAYALFHKKLTEGVLMRDPKFLWCAQCSFGFIYEREQLEATCPQCHQTFCVRCKRQWEEQHRGRSCEDFQNWKRMNDPEYQAQGLAMYLQENGIDCPKCKFSYALARGGCMHFHCTQCRHQFCSGCYNAFYAKNKCPEPNCRVKKSLHGHHPRDCLFYLRDWTALRLQKLLQDNNVMFNTEPPAGARAVPGGGCRVIEQKEVPNGLRDEACGKETPAGYAGLCQAHYKEYLVSLINAHSLDPATLYEVEELETATERYLHVRPQPLAGEDPPAYQARLLQKLTEEVPLGQSIPRRRK.

Residues 1-485 (MPGEEEERAF…PEKQRQDKMR (485 aa)) are polyubiquitin-binding. The 72-residue stretch at 71–142 (TLSTALNILE…SFPEGQEEPD (72 aa)) folds into the PUB domain. The tract at residues 263–290 (QGTHLSPSLPASAQPRPQSTSLLALGDS) is disordered. The segment covering 265 to 280 (THLSPSLPASAQPRPQ) has biased composition (polar residues). Positions 281 to 290 (STSLLALGDS) are enriched in low complexity. 2 consecutive RanBP2-type zinc fingers follow at residues 299–329 (SAHL…PRGC) and 350–379 (ARGR…PRLA). Phosphoserine is present on Ser383. Residues 409-438 (QSQVWYCIHCTFCNSSPGWVCVMCNRTSSP) form a RanBP2-type 3 zinc finger. Residues 443–484 (HAPRPYASSLEKGPPKPGPPRRLSAPLPSSCGDPEKQRQDKM) form a disordered region. The span at 463-472 (RRLSAPLPSS) shows a compositional bias: low complexity. Position 466 is a phosphoserine (Ser466). The span at 475 to 484 (DPEKQRQDKM) shows a compositional bias: basic and acidic residues. The interval 563 to 616 (GNLDEAVEECVRTRRRKVQELQSLGFGPEEGSLQALFQHGGDVSRALTELQRQR) is interaction with RBCK1. The region spanning 564-615 (NLDEAVEECVRTRRRKVQELQSLGFGPEEGSLQALFQHGGDVSRALTELQRQ) is the UBA domain. The TRIAD supradomain stretch occupies residues 695 to 929 (LAQECAVCGW…KSLHGHHPRD (235 aa)). Positions 699, 702, 717, 719, 722, and 725 each coordinate Zn(2+). Residues 699–749 (CAVCGWALPHNRMQALTSCECTICPDCFRQHFTIALKEKHITDMVCPACGR) form an RING-type 1 zinc finger. A (Microbial infection) Glycyl lysine isopeptide (Lys-Gly) (interchain with G-Cter in ubiquitin) cross-link involves residue Lys735. Residues Cys744 and Cys747 each coordinate Zn(2+). The IBR-type zinc finger occupies 779–841 (ALFHKKLTEG…WEEQHRGRSC (63 aa)). Residue Lys783 forms a (Microbial infection) Glycyl lysine isopeptide (Lys-Gly) (interchain with G-Cter in ubiquitin) linkage. Positions 799, 802, 817, 820, 825, 828, 836, 841, 871, and 874 each coordinate Zn(2+). The RING-type 2; atypical zinc-finger motif lies at 871-901 (CPKCKFSYALARGGCMHFHCTQCRHQFCSGC). Residue Lys875 forms a (Microbial infection) Glycyl lysine isopeptide (Lys-Gly) (interchain with G-Cter in ubiquitin) linkage. Cys885 is a catalytic residue. Residues Cys890, Cys893, Cys898, Cys901, Cys916, and His925 each coordinate Zn(2+). Positions 910–1072 (KCPEPNCRVK…LGQSIPRRRK (163 aa)) are LDD domain.

This sequence belongs to the RBR family. Component of the LUBAC complex (linear ubiquitin chain assembly complex) which consists of SHARPIN, RBCK1 and RNF31. LUBAC has a MW of approximately 600 kDa suggesting a heteromultimeric assembly of its subunits. Associates with the TNF-R1 signaling complex (TNF-RSC) in a stimulation-dependent manner. Interacts (via the PUB domain) with OTULIN (via the PIM motif); the interaction is direct. Interacts (via the PUB domain) with VCP (via the PIM motif). Interacts (via the PUB domain) with SPATA2 (via the PIM motif); interaction is direct and bridges RNF31 and CYLD. Interacts with CYLD; the interaction is indirect and is mediated via SPATA2. Interacts with MUSK. Interacts with CARD11, promoting linear ubiquitination of BCL10. In terms of assembly, (Microbial infection) Interacts with S.flexneri E3 ubiquitin-protein ligases IpaH1.4 and IpaH2.5, leading to its ubiquitination. In terms of processing, autoubiquitinated. Interaction with OTULIN is required to suppress formation of 'Met-1'-linked polyubiquitin chains and prevent subsequent inactivation of the LUBAC complex. Post-translationally, cleaved by caspase during apoptosis. (Microbial infection) Ubiquitinated by S.flexneri E3 ubiquitin-protein ligases IpaH1.4 and IpaH2.5, leading to its degradation by the proteasome, thereby preventing formation of the bacterial ubiquitin coat and activation of innate immunity. In terms of tissue distribution, expressed in both normal and transformed breast epithelial cell lines.

It localises to the cytoplasm. The catalysed reaction is [E2 ubiquitin-conjugating enzyme]-S-ubiquitinyl-L-cysteine + [acceptor protein]-L-lysine = [E2 ubiquitin-conjugating enzyme]-L-cysteine + [acceptor protein]-N(6)-ubiquitinyl-L-lysine.. Its pathway is protein modification; protein ubiquitination. In terms of biological role, E3 ubiquitin-protein ligase component of the LUBAC complex which conjugates linear ('Met-1'-linked) polyubiquitin chains to substrates and plays a key role in NF-kappa-B activation and regulation of inflammation. LUBAC conjugates linear polyubiquitin to IKBKG and RIPK1 and is involved in activation of the canonical NF-kappa-B and the JNK signaling pathways. Linear ubiquitination mediated by the LUBAC complex interferes with TNF-induced cell death and thereby prevents inflammation. LUBAC is recruited to the TNF-R1 signaling complex (TNF-RSC) following polyubiquitination of TNF-RSC components by BIRC2 and/or BIRC3 and to conjugate linear polyubiquitin to IKBKG and possibly other components contributing to the stability of the complex. The LUBAC complex is also involved in innate immunity by conjugating linear polyubiquitin chains at the surface of bacteria invading the cytosol to form the ubiquitin coat surrounding bacteria. LUBAC is not able to initiate formation of the bacterial ubiquitin coat, and can only promote formation of linear polyubiquitins on pre-existing ubiquitin. Recruited to the surface of bacteria by RNF213, which initiates the bacterial ubiquitin coat. The bacterial ubiquitin coat acts as an 'eat-me' signal for xenophagy and promotes NF-kappa-B activation. Together with OTULIN, the LUBAC complex regulates the canonical Wnt signaling during angiogenesis. RNF31 is required for linear ubiquitination of BCL10, thereby promoting TCR-induced NF-kappa-B activation. Binds polyubiquitin of different linkage types. The chain is E3 ubiquitin-protein ligase RNF31 from Homo sapiens (Human).